A 296-amino-acid polypeptide reads, in one-letter code: Aquaporin NIP1-1 (296 aa).

Residue M1 is modified to N-acetylmethionine. 2 consecutive transmembrane segments (helical) span residues 57 to 77 (LIAE…SVVV) and 84 to 104 (VVTL…LIYS). The short motif at 114 to 116 (NPA) is the NPA 1 element. 3 consecutive transmembrane segments (helical) span residues 136-156 (VISQ…LFGL), 180-200 (AFTM…GVAT), and 205-225 (IGEL…LIAA). The NPA 2 signature appears at 233–235 (NPG). The helical transmembrane segment at 249 to 269 (GIWIYLVAPTLGAIAGAWVYN) threads the bilayer. A Phosphoserine modification is found at S286.

Belongs to the MIP/aquaporin (TC 1.A.8) family. NIP (TC 1.A.8.12) subfamily. In terms of tissue distribution, expressed in roots.

It localises to the membrane. In terms of biological role, water channel probably required to promote glycerol permeability and water transport across cell membranes. This is Aquaporin NIP1-1 (NIP1-1) from Arabidopsis thaliana (Mouse-ear cress).